The sequence spans 317 residues: Acetyl-coenzyme A carboxylase carboxyl transferase subunit alpha (317 aa).

In terms of domain architecture, CoA carboxyltransferase C-terminal spans 40–293 (LEKRSADALK…GDIIAASLRS (254 aa)).

This sequence belongs to the AccA family. Acetyl-CoA carboxylase is a heterohexamer composed of biotin carboxyl carrier protein (AccB), biotin carboxylase (AccC) and two subunits each of ACCase subunit alpha (AccA) and ACCase subunit beta (AccD).

It is found in the cytoplasm. The catalysed reaction is N(6)-carboxybiotinyl-L-lysyl-[protein] + acetyl-CoA = N(6)-biotinyl-L-lysyl-[protein] + malonyl-CoA. The protein operates within lipid metabolism; malonyl-CoA biosynthesis; malonyl-CoA from acetyl-CoA: step 1/1. Component of the acetyl coenzyme A carboxylase (ACC) complex. First, biotin carboxylase catalyzes the carboxylation of biotin on its carrier protein (BCCP) and then the CO(2) group is transferred by the carboxyltransferase to acetyl-CoA to form malonyl-CoA. In Brucella canis (strain ATCC 23365 / NCTC 10854 / RM-666), this protein is Acetyl-coenzyme A carboxylase carboxyl transferase subunit alpha.